Reading from the N-terminus, the 327-residue chain is Small ribosomal subunit protein RACK1 (327 aa).

WD repeat units follow at residues 13-44, 61-91, 103-133, 148-180, 192-222, 233-262, and 293-323; these read AHTD…IVWK, GHSH…RLWD, GHTK…KLWN, GHRD…KVWN, GHTG…LLWD, EANS…KIWD, and RKVI…RVWG.

Belongs to the WD repeat G protein beta family. Ribosomal protein RACK1 subfamily.

The chain is Small ribosomal subunit protein RACK1 (GB1) from Brassica napus (Rape).